The chain runs to 304 residues: Acetyl-coenzyme A carboxylase carboxyl transferase subunit beta (304 aa).

The CoA carboxyltransferase N-terminal domain maps to 23 to 292 (VWTKCDSCGQ…PNPEAPREGV (270 aa)). Zn(2+)-binding residues include Cys-27, Cys-30, Cys-46, and Cys-49. The C4-type zinc-finger motif lies at 27–49 (CDSCGQVLYRAELERNLEVCPKC). The disordered stretch occupies residues 284-304 (NPEAPREGVVVPPVPDQEPEA). Positions 295–304 (PPVPDQEPEA) are enriched in pro residues.

It belongs to the AccD/PCCB family. Acetyl-CoA carboxylase is a heterohexamer composed of biotin carboxyl carrier protein (AccB), biotin carboxylase (AccC) and two subunits each of ACCase subunit alpha (AccA) and ACCase subunit beta (AccD). Zn(2+) serves as cofactor.

The protein localises to the cytoplasm. The catalysed reaction is N(6)-carboxybiotinyl-L-lysyl-[protein] + acetyl-CoA = N(6)-biotinyl-L-lysyl-[protein] + malonyl-CoA. It functions in the pathway lipid metabolism; malonyl-CoA biosynthesis; malonyl-CoA from acetyl-CoA: step 1/1. Functionally, component of the acetyl coenzyme A carboxylase (ACC) complex. Biotin carboxylase (BC) catalyzes the carboxylation of biotin on its carrier protein (BCCP) and then the CO(2) group is transferred by the transcarboxylase to acetyl-CoA to form malonyl-CoA. This chain is Acetyl-coenzyme A carboxylase carboxyl transferase subunit beta, found in Shigella boydii serotype 18 (strain CDC 3083-94 / BS512).